We begin with the raw amino-acid sequence, 861 residues long: Translation initiation factor IF-2 (861 aa).

Disordered regions lie at residues 1 to 69 (MSDA…GESA) and 92 to 273 (ARAR…GREK). Over residues 53 to 65 (GGPGGKQGGGAKG) the composition is skewed to gly residues. Over residues 94–108 (ARAEAADREAQKKQD) the composition is skewed to basic and acidic residues. Residues 109-120 (AAAMAQRAASEQ) are compositionally biased toward low complexity. Composition is skewed to basic and acidic residues over residues 121 to 155 (RQLE…KAEA) and 163 to 186 (DSGR…KRTP). Over residues 213 to 223 (PGPAAKQQPAR) the composition is skewed to low complexity. The span at 255 to 273 (RAREREKQRRQDTSGGREK) shows a compositional bias: basic and acidic residues. The tr-type G domain maps to 357–527 (PRAPVIAVMG…ALQAELLDLK (171 aa)). The interval 366–373 (GHVDHGKT) is G1. Residue 366–373 (GHVDHGKT) participates in GTP binding. Residues 391-395 (GITQH) form a G2 region. The G3 stretch occupies residues 413-416 (DTPG). Residues 413–417 (DTPGH) and 467–470 (NKCD) each bind GTP. Residues 467-470 (NKCD) are G4. Residues 503–505 (SAK) form a G5 region.

This sequence belongs to the TRAFAC class translation factor GTPase superfamily. Classic translation factor GTPase family. IF-2 subfamily.

It is found in the cytoplasm. In terms of biological role, one of the essential components for the initiation of protein synthesis. Protects formylmethionyl-tRNA from spontaneous hydrolysis and promotes its binding to the 30S ribosomal subunits. Also involved in the hydrolysis of GTP during the formation of the 70S ribosomal complex. The polypeptide is Translation initiation factor IF-2 (Maricaulis maris (strain MCS10) (Caulobacter maris)).